The chain runs to 804 residues: Phenylalanine--tRNA ligase beta subunit (804 aa).

The 117-residue stretch at 39–155 folds into the tRNA-binding domain; it reads EEGLKKLVVG…ADVKPGQDVY (117 aa). The B5 domain occupies 408-483; sequence REPVVVKTTV…RIYGYDNLKS (76 aa). Residues Asp-461, Asp-467, Glu-470, and Glu-471 each contribute to the Mg(2+) site. In terms of domain architecture, FDX-ACB spans 711–804; the sequence is PKFPAIERDL…LENDLDIKVR (94 aa).

Belongs to the phenylalanyl-tRNA synthetase beta subunit family. Type 1 subfamily. In terms of assembly, tetramer of two alpha and two beta subunits. It depends on Mg(2+) as a cofactor.

The protein resides in the cytoplasm. The enzyme catalyses tRNA(Phe) + L-phenylalanine + ATP = L-phenylalanyl-tRNA(Phe) + AMP + diphosphate + H(+). The polypeptide is Phenylalanine--tRNA ligase beta subunit (Lactobacillus acidophilus (strain ATCC 700396 / NCK56 / N2 / NCFM)).